Consider the following 107-residue polypeptide: Circadian clock oscillator protein KaiB (107 aa).

Belongs to the KaiB family. May undergo a major conformational rearrangment; in the free state forms homooligomers. When bound to KaiC switches to a monomeric thioredoxin-fold (KaiB(fs)). The active oscillator complex is probably KaiC(6):KaiB(6).

Its function is as follows. Component of the KaiBC clock protein complex, which constitutes the main circadian regulator in cyanobacteria; it may modify the ATPase activity of KaiC. In terms of biological role, does not stimulate dephosphorylation of endogenous KaiC, although it does stimulate dephosphorylation of KiaC from S.elongatus strain PCC 7942. Reduces the ATPase activity of KaiC by about half in vitro, which may be its function in vivo. May be a metamorphic protein which reversibly switches between an inactive tetrameric fold and a rare, thioredoxin-like monomeric fold (KaiB(fs)). KaiB(fs) binds phospho-KaiC, and perhaps clock output effectors. The polypeptide is Circadian clock oscillator protein KaiB (Prochlorococcus marinus subsp. pastoris (strain CCMP1986 / NIES-2087 / MED4)).